The primary structure comprises 79 residues: Hematopoietic cell signal transducer (79 aa).

Residues 1-18 (MAPPGGILFLLLLPVAAA) form the signal peptide. Residues 19–35 (QVTSGSCSGCGPLSLPL) lie on the Extracellular side of the membrane. A helical membrane pass occupies residues 36–56 (LAGLVAADAVVSLLIVVGVFV). At 57–79 (CGRPRSRPTQEDGKIYINMPGRG) the chain is on the cytoplasmic side. Y72 is modified (phosphotyrosine). The segment at 72 to 74 (YIN) is GRB2 binding site. A PIK3R1 binding site region spans residues 72-75 (YINM).

This sequence belongs to the DAP10 family. As to quaternary structure, homodimer; Disulfide-linked. Heterohexamer composed of four subunits of HCST/DAP10 and two subunits of KLRK1. Interacts (via transmembrane domain) with KLRK1 (via transmembrane domain); the interaction is required for KLRK1 NK cell surface and induces NK cell-mediated cytotoxicity. Interacts with PIK3R1 and GRB2. Interacts with CLEC5A. Forms an CLEC5A/TYROBP/HCST trimolecular complex depending almost solely on TYROBP. Interacts with KLRK1. Interacts with CD300H. Post-translationally, phosphorylated; PIK3R1 and GRB2 associate specifically with tyrosine-phosphorylated HCST. O-glycosylated. Expressed predominantly in lymphohematopoietic tissues.

It localises to the membrane. In terms of biological role, transmembrane adapter protein which associates with KLRK1 to form an activation receptor KLRK1-HCST in lymphoid and myeloid cells; this receptor plays a major role in triggering cytotoxicity against target cells expressing cell surface ligands such as MHC class I chain-related MICA and MICB, and UL16-binding proteins (ULBPs); these ligands are up-regulated by stress conditions and pathological state such as viral infection and tumor transformation. Functions as a docking site for PI3-kinase PIK3R1 and GRB2. Interaction of ULBPs with KLRK1-HCST triggers calcium mobilization and activation of the PIK3R1, MAP2K/ERK, and JAK2/STAT5 signaling pathways. Both PIK3R1 and GRB2 are required for full KLRK1-HCST-mediated activation and ultimate killing of target cells. In NK cells, KLRK1-HCST signaling directly induces cytotoxicity and enhances cytokine production initiated via DAP12/TYROBP-associated receptors. In T-cells, it provides primarily costimulation for TCR-induced signals. KLRK1-HCST receptor plays a role in immune surveillance against tumors and is required for cytolysis of tumors cells; indeed, melanoma cells that do not express KLRK1 ligands escape from immune surveillance mediated by NK cells. This Sus scrofa (Pig) protein is Hematopoietic cell signal transducer (HCST).